The primary structure comprises 295 residues: Undecaprenyl-diphosphatase (295 aa).

7 helical membrane passes run I12–V34, F50–W70, I95–H115, L120–F140, A209–P229, T243–M263, and W272–L292.

This sequence belongs to the UppP family.

It is found in the cell inner membrane. The enzyme catalyses di-trans,octa-cis-undecaprenyl diphosphate + H2O = di-trans,octa-cis-undecaprenyl phosphate + phosphate + H(+). Catalyzes the dephosphorylation of undecaprenyl diphosphate (UPP). Confers resistance to bacitracin. In Granulibacter bethesdensis (strain ATCC BAA-1260 / CGDNIH1), this protein is Undecaprenyl-diphosphatase.